The following is a 557-amino-acid chain: Ribonuclease J 2 (557 aa).

4 residues coordinate Zn(2+): histidine 76, histidine 78, histidine 144, and glutamate 166. Substrate is bound at residue 366-370 (HASSH).

The protein belongs to the metallo-beta-lactamase superfamily. RNA-metabolizing metallo-beta-lactamase-like family. Bacterial RNase J subfamily. In terms of assembly, homodimer, may be a subunit of the RNA degradosome. The cofactor is Zn(2+).

Its subcellular location is the cytoplasm. Its function is as follows. An RNase that has 5'-3' exonuclease and possibly endoonuclease activity. Involved in maturation of rRNA and in some organisms also mRNA maturation and/or decay. This chain is Ribonuclease J 2, found in Staphylococcus epidermidis (strain ATCC 35984 / DSM 28319 / BCRC 17069 / CCUG 31568 / BM 3577 / RP62A).